A 567-amino-acid chain; its full sequence is Probable E3 ubiquitin-protein ligase ARI8 (567 aa).

Residues 1 to 27 (MEADDDFYSGTENYSDYADSDEDDADG) are disordered. Positions 18-27 (ADSDEDDADG) are enriched in acidic residues. The interval 124 to 337 (GELDCGICFE…GGFYACNRYE (214 aa)) is TRIAD supradomain. Residues C128, C131, C145, H147, C150, C153, C173, C178, C217, C222, C239, C241, C246, C249, H254, C259, C286, and C289 each coordinate Zn(2+). The RING-type 1 zinc finger occupies 128–178 (CGICFETFLSDKLHAAACGHPFCDSCWEGYITTAINDGPGCLTLRCPDPSC). The IBR-type zinc finger occupies 197 to 259 (QKYTSYFVRS…AEEAHRPVDC (63 aa)). The segment at 286–316 (CPKCKRPIEKNQGCMHITCTPPCKFEFCWLC) adopts an RING-type 2; atypical zinc-finger fold. C299 is an active-site residue. C304, C308, C313, C316, H323, and C333 together coordinate Zn(2+). The disordered stretch occupies residues 514–543 (DAYDRTSSSKSLGGKTKGSSSKASSSDSSH). Over residues 521–542 (SSKSLGGKTKGSSSKASSSDSS) the composition is skewed to low complexity. The RanBP2-type zinc finger occupies 540 to 567 (DSSHWPCEYCTYVNPRSTTICQMCEHGR).

It belongs to the RBR family. Ariadne subfamily. Requires Zn(2+) as cofactor. In terms of tissue distribution, ubiquitous.

It catalyses the reaction [E2 ubiquitin-conjugating enzyme]-S-ubiquitinyl-L-cysteine + [acceptor protein]-L-lysine = [E2 ubiquitin-conjugating enzyme]-L-cysteine + [acceptor protein]-N(6)-ubiquitinyl-L-lysine.. It functions in the pathway protein modification; protein ubiquitination. Might act as an E3 ubiquitin-protein ligase, or as part of E3 complex, which accepts ubiquitin from specific E2 ubiquitin-conjugating enzymes and then transfers it to substrates. This chain is Probable E3 ubiquitin-protein ligase ARI8 (ARI8), found in Arabidopsis thaliana (Mouse-ear cress).